A 50-amino-acid polypeptide reads, in one-letter code: Large ribosomal subunit protein bL32 (50 aa).

Positions 1–26 (MAVPKRRVSHTRSAKRRTHYKITLKK) are enriched in basic residues. Residues 1–50 (MAVPKRRVSHTRSAKRRTHYKITLKKPVKDSDGSWKMPHMVNPNTGEYKN) are disordered.

The protein belongs to the bacterial ribosomal protein bL32 family.

The polypeptide is Large ribosomal subunit protein bL32 (Aliarcobacter butzleri (strain RM4018) (Arcobacter butzleri)).